The sequence spans 1074 residues: Phospholipase D1 (1074 aa).

Positions I81–S212 constitute a PX domain. Residues P219–Q328 form the PH domain. S-palmitoyl cysteine attachment occurs at residues C240 and C241. Residues Y459–R486 enclose the PLD phosphodiesterase 1 domain. The tract at residues H463–A928 is catalytic. Phosphoserine occurs at positions 499, 561, and 629. Residues E891 to S918 enclose the PLD phosphodiesterase 2 domain.

It belongs to the phospholipase D family. As to quaternary structure, interacts with PIP5K1B. In terms of tissue distribution, expressed abundantly in the pancreas and heart and at high levels in brain, placenta, spleen, uterus and small intestine.

The protein localises to the cytoplasm. It is found in the perinuclear region. It localises to the endoplasmic reticulum membrane. Its subcellular location is the golgi apparatus membrane. The protein resides in the late endosome membrane. The catalysed reaction is a 1,2-diacyl-sn-glycero-3-phosphocholine + H2O = a 1,2-diacyl-sn-glycero-3-phosphate + choline + H(+). The enzyme catalyses ethanol + a 1,2-diacyl-sn-glycero-3-phosphocholine = 1,2-diacyl-sn-glycero-3-phosphoethanol + choline. It catalyses the reaction 1,2-dihexadecanoyl-sn-glycero-3-phosphocholine + H2O = 1,2-dihexadecanoyl-sn-glycero-3-phosphate + choline + H(+). Stimulated by phosphatidylinositol 4,5-bisphosphate and phosphatidylinositol 3,4,5-trisphosphate, activated by the phosphokinase C-alpha, by the ADP-ribosylation factor-1 (ARF-1), and to a lesser extent by GTP-binding proteins: RHO A, RAC-1 and CDC42. Inhibited by oleate. Functionally, function as phospholipase selective for phosphatidylcholine. Implicated as a critical step in numerous cellular pathways, including signal transduction, membrane trafficking, and the regulation of mitosis. May be involved in the regulation of perinuclear intravesicular membrane traffic. The polypeptide is Phospholipase D1 (Homo sapiens (Human)).